Consider the following 380-residue polypeptide: 3-dehydroquinate synthase (380 aa).

NAD(+) contacts are provided by residues 100–104, 124–125, K137, and K146; these read GAASD and TT. Residues E179, H251, and H267 each coordinate Zn(2+).

This sequence belongs to the sugar phosphate cyclases superfamily. Dehydroquinate synthase family. NAD(+) is required as a cofactor. The cofactor is Co(2+). It depends on Zn(2+) as a cofactor.

It localises to the cytoplasm. It carries out the reaction 7-phospho-2-dehydro-3-deoxy-D-arabino-heptonate = 3-dehydroquinate + phosphate. The protein operates within metabolic intermediate biosynthesis; chorismate biosynthesis; chorismate from D-erythrose 4-phosphate and phosphoenolpyruvate: step 2/7. Catalyzes the conversion of 3-deoxy-D-arabino-heptulosonate 7-phosphate (DAHP) to dehydroquinate (DHQ). The chain is 3-dehydroquinate synthase from Tropheryma whipplei (strain TW08/27) (Whipple's bacillus).